Consider the following 963-residue polypeptide: Protein bicaudal C homolog 1-A (963 aa).

Positions 1–48 (MAAQCESIGGDMNQSDPGSNSERSADSPVPGSEDDSPHDPEWREERFR) are disordered. The segment covering 12–22 (MNQSDPGSNSE) has biased composition (polar residues). Basic and acidic residues predominate over residues 35–48 (DSPHDPEWREERFR). KH domains are found at residues 128–195 (RVTL…RVRI) and 280–344 (PVST…RQYL). The span at 592-601 (EASRQSNNHS) shows a compositional bias: polar residues. Disordered stretches follow at residues 592–613 (EASR…TDPE), 668–713 (ERLL…TSQS), and 767–834 (LRRA…NKSA). 2 stretches are compositionally biased toward basic and acidic residues: residues 602–612 (SAEEVNSKTDP) and 683–696 (VTDK…RAAE). The segment covering 784 to 797 (ENSSLSRSNSREQL) has biased composition (low complexity). Over residues 812–824 (IDSSQNDYSSSIG) the composition is skewed to polar residues. Residues 862–925 (FKGSDLPELF…LLAISELNKN (64 aa)) form the SAM domain.

It belongs to the BicC family.

Its function is as follows. Putative RNA-binding protein. May be involved in regulating gene expression during embryonic development. Seems to be involved in endoderm formation. Ectopic expression results in endoderm formation in the absence of mesoderm induction. The chain is Protein bicaudal C homolog 1-A (bicc1-a) from Xenopus laevis (African clawed frog).